Consider the following 963-residue polypeptide: Aminopeptidase N (963 aa).

At 2–8 (AKGFYIS) the chain is on the cytoplasmic side. The chain crosses the membrane as a helical; Signal-anchor for type II membrane protein span at residues 9 to 32 (KALGILGILLGVAAVATIIALSVV). Positions 33–64 (YAQEKNKNAEHVPQAPTSPTITTTAAITLDQS) are cytosolic Ser/Thr-rich junction. The Extracellular segment spans residues 33-963 (YAQEKNKNAE…VVLNWFIEHS (931 aa)). A metalloprotease region spans residues 65-963 (KPWNRYRLPT…VVLNWFIEHS (899 aa)). 2 N-linked (GlcNAc...) asparagine glycosylation sites follow: Asn-82 and Asn-124. Tyr-171 carries the post-translational modification Sulfotyrosine. Asn-229, Asn-237, Asn-258, Asn-286, Asn-314, and Asn-328 each carry an N-linked (GlcNAc...) asparagine glycan. 347-351 (GAMEN) is a binding site for substrate. Residue His-383 participates in Zn(2+) binding. Catalysis depends on Glu-384, which acts as the Proton acceptor. Positions 387 and 406 each coordinate Zn(2+). 6 N-linked (GlcNAc...) asparagine glycosylation sites follow: Asn-506, Asn-556, Asn-569, Asn-622, Asn-646, and Asn-736. An interaction with TGEV spike glycoprotein region spans residues 717 to 813 (KYLRKQVEPL…DQWDFAWGQL (97 aa)). Intrachain disulfides connect Cys-758–Cys-765 and Cys-795–Cys-831.

This sequence belongs to the peptidase M1 family. Homodimer. Interacts with SLC6A19. In terms of assembly, (Microbial infection) Interacts with TGEV and PRCoV spike glycoprotein. The cofactor is Zn(2+). In terms of processing, sulfated. N- and O-glycosylated. Post-translationally, may undergo proteolysis and give rise to a soluble form.

The protein resides in the cell membrane. The enzyme catalyses Release of an N-terminal amino acid, Xaa-|-Yaa- from a peptide, amide or arylamide. Xaa is preferably Ala, but may be most amino acids including Pro (slow action). When a terminal hydrophobic residue is followed by a prolyl residue, the two may be released as an intact Xaa-Pro dipeptide.. Broad specificity aminopeptidase which plays a role in the final digestion of peptides generated from hydrolysis of proteins by gastric and pancreatic proteases. Also involved in the processing of various peptides including peptide hormones, such as angiotensin III and IV, neuropeptides, and chemokines. May also be involved the cleavage of peptides bound to major histocompatibility complex class II molecules of antigen presenting cells. May have a role in angiogenesis and promote cholesterol crystallization. It is able to degrade Leu-enkephalin and Met-enkephalin but not cholecystokinin CCK8, neuromedin C (GRP-10), somatostatin-14, substance P and vasoactive intestinal peptide. May have a role in amino acid transport by acting as binding partner of amino acid transporter SLC6A19 and regulating its activity. Functionally, (Microbial infection) In case of porcine transmissible gastroenteritis coronavirus (TGEV) and porcine respiratory coronavirus (PRCoV) infections, serves as a receptor for TGEV and PRCoV spike glycoprotein in a species-specific manner. The polypeptide is Aminopeptidase N (ANPEP) (Sus scrofa (Pig)).